We begin with the raw amino-acid sequence, 911 residues long: Alpha-actinin-4 (911 aa).

Positions 1 to 30 are disordered; that stretch reads MVDYHAASQSYQYGPSSAGNGAGGGGSMGD. The interval 1-269 is actin-binding; that stretch reads MVDYHAASQS…YVSSFYHAFS (269 aa). Residues 12 to 26 are interaction with VCL; sequence QYGPSSAGNGAGGGG. Position 31 is a phosphotyrosine (Tyr-31). The interaction with VCL stretch occupies residues 40 to 61; that stretch reads RDLLLDPAWEKQQRKTFTAWCN. 2 Calponin-homology (CH) domains span residues 50–154 and 163–269; these read KQQR…LRFA and TSAK…HAFS. Residues 84–88 carry the LXXLL motif motif; it reads LMLLL. Positions 108-126 are interaction with VCL; it reads KINNVNKALDFIASKGVKL. N6-acetyllysine is present on Lys-114. The interval 177-192 is polyphosphoinositide (PIP2)-binding; the sequence is TAPYKNVNVQNFHISW. An N6-acetyllysine modification is found at Lys-214. Residue Thr-249 is modified to Phosphothreonine. Spectrin repeat units follow at residues 293–403, 413–518, 528–639, and 649–752; these read HLME…WLLN, HLAE…ALEK, QLHL…ALLE, and HLRR…EVEN. Residues Lys-592 and Lys-625 each carry the N6-acetyllysine modification. Ser-696 is modified (phosphoserine). The interval 736–911 is mediates interaction with MICALL2; the sequence is WEQLLTTIAR…STALYGESDL (176 aa). EF-hand domains lie at 765–800 and 806–841; these read EQMQ…LGYD and QGEA…ETTD. Position 778 (Asp-778) interacts with Ca(2+). Position 779 is an N6-acetyllysine (Lys-779). Residues Asp-780 and Glu-789 each coordinate Ca(2+). N6-acetyllysine is present on Lys-859. Phosphoserine is present on Ser-909.

Belongs to the alpha-actinin family. Homodimer; antiparallel. Identified in a IGF2BP1-dependent mRNP granule complex containing untranslated mRNAs. Component of the CART complex, at least composed of ACTN4, HGS/HRS, MYO5B and TRIM3. Binds TRIM3 at the N-terminus. Interacts with MAGI1. Interacts with PDLIM2. Identified in a complex with CASK, IQGAP1, MAGI2, NPHS1, SPTAN1 and SPTBN1. Interacts with MICALL2 (preferentially in opened conformation); stimulated by RAB13 activation. Interacts with PPARG and RARA. Binds to VCL; this interaction triggers VCL conformational changes. Interacts with SEPTIN14. Interacts with IGSF8.

It localises to the nucleus. Its subcellular location is the cytoplasm. The protein localises to the cell junction. It is found in the cytoskeleton. The protein resides in the stress fiber. It localises to the perinuclear region. Its function is as follows. F-actin cross-linking protein which is thought to anchor actin to a variety of intracellular structures. This is a bundling protein. Probably involved in vesicular trafficking via its association with the CART complex. The CART complex is necessary for efficient transferrin receptor recycling but not for EGFR degradation. Involved in tight junction assembly in epithelial cells probably through interaction with MICALL2. Links MICALL2 to the actin cytoskeleton and recruits it to the tight junctions. May also function as a transcriptional coactivator, stimulating transcription mediated by the nuclear hormone receptors PPARG and RARA. Association with IGSF8 regulates the immune synapse formation and is required for efficient T-cell activation. This Pongo abelii (Sumatran orangutan) protein is Alpha-actinin-4.